A 241-amino-acid polypeptide reads, in one-letter code: 1-(5-phosphoribosyl)-5-[(5-phosphoribosylamino)methylideneamino] imidazole-4-carboxamide isomerase (241 aa).

Residue aspartate 8 is the Proton acceptor of the active site. Aspartate 129 serves as the catalytic Proton donor.

The protein belongs to the HisA/HisF family.

The protein localises to the cytoplasm. It carries out the reaction 1-(5-phospho-beta-D-ribosyl)-5-[(5-phospho-beta-D-ribosylamino)methylideneamino]imidazole-4-carboxamide = 5-[(5-phospho-1-deoxy-D-ribulos-1-ylimino)methylamino]-1-(5-phospho-beta-D-ribosyl)imidazole-4-carboxamide. It participates in amino-acid biosynthesis; L-histidine biosynthesis; L-histidine from 5-phospho-alpha-D-ribose 1-diphosphate: step 4/9. This Chloroflexus aurantiacus (strain ATCC 29364 / DSM 637 / Y-400-fl) protein is 1-(5-phosphoribosyl)-5-[(5-phosphoribosylamino)methylideneamino] imidazole-4-carboxamide isomerase.